The sequence spans 651 residues: PTS system N-acetylglucosamine-specific EIICBA component (651 aa).

The region spanning 1 to 371 (MNILGFFQRL…FNLKTPGRED (371 aa)) is the PTS EIIC type-1 domain. The next 12 helical transmembrane spans lie at 16 to 36 (LPIA…PDLL), 40 to 60 (FIAQ…AIGV), 70 to 90 (GSAA…MVTI), 92 to 112 (PEIN…GAVY), 132 to 152 (FVPI…GYVW), 165 to 185 (WIVS…RLLI), 192 to 212 (VLNT…GTVF), 232 to 252 (GFFP…YLAA), 264 to 284 (LLSV…EFLF), 285 to 305 (LFLA…SLFI), 308 to 328 (ALGI…VLMY), and 339 to 359 (MLLV…SAVI). In terms of domain architecture, PTS EIIB type-1 spans 390-472 (TQLATSYIAA…KKVVTRGPVA (83 aa)). Cys-412 functions as the Phosphocysteine intermediate; for EIIB activity in the catalytic mechanism. Cys-412 is subject to Phosphocysteine; by EIIA. The 105-residue stretch at 519–623 (DEAFASKAVG…SMISPVVCSN (105 aa)) folds into the PTS EIIA type-1 domain. Residues His-556 and His-571 each contribute to the Zn(2+) site. His-571 serves as the catalytic Tele-phosphohistidine intermediate; for EIIA activity. A Phosphohistidine; by HPr modification is found at His-571.

It depends on Zn(2+) as a cofactor.

It is found in the cell inner membrane. The enzyme catalyses N(pros)-phospho-L-histidyl-[protein] + N-acetyl-D-glucosamine(out) = N-acetyl-D-glucosamine 6-phosphate(in) + L-histidyl-[protein]. In terms of biological role, the phosphoenolpyruvate-dependent sugar phosphotransferase system (sugar PTS), a major carbohydrate active transport system, catalyzes the phosphorylation of incoming sugar substrates concomitantly with their translocation across the cell membrane. This system is involved in N-acetylglucosamine transport. The chain is PTS system N-acetylglucosamine-specific EIICBA component (nagE) from Klebsiella pneumoniae.